We begin with the raw amino-acid sequence, 249 residues long: Chymase (249 aa).

An N-terminal signal peptide occupies residues 1-19 (MHCLPLTLLLLLLCSRAEA). Positions 20-21 (EE) are cleaved as a propeptide — activation peptide. Positions 22-245 (IIGGTESKPH…YRPWINKVLK (224 aa)) constitute a Peptidase S1 domain. Cys51 and Cys67 form a disulfide bridge. Active-site charge relay system residues include His66 and Asp110. 2 disulfides stabilise this stretch: Cys144-Cys209 and Cys175-Cys188. The active-site Charge relay system is Ser203.

This sequence belongs to the peptidase S1 family. Granzyme subfamily.

The protein resides in the secreted. Its subcellular location is the cytoplasmic granule. The enzyme catalyses Preferential cleavage: Phe-|-Xaa &gt; Tyr-|-Xaa &gt; Trp-|-Xaa &gt; Leu-|-Xaa.. Its function is as follows. Major secreted protease of mast cells with suspected roles in vasoactive peptide generation, extracellular matrix degradation, and regulation of gland secretion. The protein is Chymase (CMA1) of Canis lupus familiaris (Dog).